The primary structure comprises 126 residues: Aspartate 1-decarboxylase (126 aa).

Residue serine 25 is the Schiff-base intermediate with substrate; via pyruvic acid of the active site. Serine 25 carries the post-translational modification Pyruvic acid (Ser). Threonine 57 is a substrate binding site. Tyrosine 58 acts as the Proton donor in catalysis. 73 to 75 (GSA) lines the substrate pocket.

It belongs to the PanD family. As to quaternary structure, heterooctamer of four alpha and four beta subunits. The cofactor is pyruvate. In terms of processing, is synthesized initially as an inactive proenzyme, which is activated by self-cleavage at a specific serine bond to produce a beta-subunit with a hydroxyl group at its C-terminus and an alpha-subunit with a pyruvoyl group at its N-terminus.

The protein resides in the cytoplasm. It catalyses the reaction L-aspartate + H(+) = beta-alanine + CO2. The protein operates within cofactor biosynthesis; (R)-pantothenate biosynthesis; beta-alanine from L-aspartate: step 1/1. Functionally, catalyzes the pyruvoyl-dependent decarboxylation of aspartate to produce beta-alanine. The sequence is that of Aspartate 1-decarboxylase from Acidovorax ebreus (strain TPSY) (Diaphorobacter sp. (strain TPSY)).